The chain runs to 138 residues: Small ribosomal subunit protein uS11c (138 aa).

The tract at residues 1–22 (MAKPILRVGSRKNTRSASRKNV) is disordered. Basic residues predominate over residues 9-22 (GSRKNTRSASRKNV).

It belongs to the universal ribosomal protein uS11 family. In terms of assembly, part of the 30S ribosomal subunit.

It is found in the plastid. The protein resides in the chloroplast. The protein is Small ribosomal subunit protein uS11c of Draba nemorosa (Woodland whitlowgrass).